A 106-amino-acid chain; its full sequence is MQDLESLYQMVAARKANPKEGSYTDYLFTKGLDKILKKVGEETTEVIVAAKNEGTAELQYETADLLYHLMVLLVEQGLTYDDIKEELGKREGLMSDFKDRPEIKDL.

Belongs to the PRA-PH family.

Its subcellular location is the cytoplasm. It carries out the reaction 1-(5-phospho-beta-D-ribosyl)-ATP + H2O = 1-(5-phospho-beta-D-ribosyl)-5'-AMP + diphosphate + H(+). Its pathway is amino-acid biosynthesis; L-histidine biosynthesis; L-histidine from 5-phospho-alpha-D-ribose 1-diphosphate: step 2/9. This chain is Phosphoribosyl-ATP pyrophosphatase, found in Limosilactobacillus fermentum (strain NBRC 3956 / LMG 18251) (Lactobacillus fermentum).